The sequence spans 303 residues: N-acetyl-D-glucosamine kinase (303 aa).

Residues 4–11 (GFDIGGTK) and 133–140 (GVGGGLIF) contribute to the ATP site. The Zn(2+) site is built by histidine 157, cysteine 177, cysteine 179, and cysteine 184.

This sequence belongs to the ROK (NagC/XylR) family. NagK subfamily.

It catalyses the reaction N-acetyl-D-glucosamine + ATP = N-acetyl-D-glucosamine 6-phosphate + ADP + H(+). Its pathway is cell wall biogenesis; peptidoglycan recycling. In terms of biological role, catalyzes the phosphorylation of N-acetyl-D-glucosamine (GlcNAc) derived from cell-wall degradation, yielding GlcNAc-6-P. This Escherichia coli O127:H6 (strain E2348/69 / EPEC) protein is N-acetyl-D-glucosamine kinase.